The sequence spans 151 residues: Guanylate kinase homolog (151 aa).

Positions 1–141 (MEREGVDYHY…AYSKLIQILQ (141 aa)) constitute a Guanylate kinase-like domain.

Belongs to the guanylate kinase family.

This is Guanylate kinase homolog from Bos taurus (Bovine).